Here is a 195-residue protein sequence, read N- to C-terminus: Ras-related protein Rab-31 (195 aa).

GTP-binding residues include G16, G18, K19, S20, S21, D32, and H33. Mg(2+) is bound at residue S20. 2 consecutive short sequence motifs (switch) follow at residues 30–42 (HFDHNISPTIGAS) and 63–79 (AGQERFHSLAPMYYRGS). Residue S36 is modified to Phosphoserine. GTP-binding residues include T38, G64, N119, D122, A150, and K151. Mg(2+) is bound at residue T38. Residues 168–195 (PPLGPQENGNSGGIKLGNQSLQASRRCC) form a disordered region. Residues 184-195 (GNQSLQASRRCC) show a composition bias toward polar residues. Residues C194 and C195 are each lipidated (S-geranylgeranyl cysteine).

It belongs to the small GTPase superfamily. Rab family. Interacts with OCRL. Interacts (in GDP-bound form) with RIN3 and GAPVD1, which function as guanine exchange factors (GEF). Interacts with EGFR. Interacts with NGFR. Interacts (in GTP-bound form) with EEA1. Interacts (in GTP-bound form) with APPL2; interaction contributes to or enhances recruitment of APPL2 to the phagosomes; interaction enhances Fc-gamma receptor-mediated phagocytosis through PI3K/Akt signaling in macrophages. Requires Mg(2+) as cofactor. As to expression, detected in brain astrocytes (at protein level).

It is found in the early endosome. It localises to the golgi apparatus. The protein resides in the trans-Golgi network. Its subcellular location is the trans-Golgi network membrane. The protein localises to the cytoplasmic vesicle. It is found in the phagosome. It localises to the phagosome membrane. The catalysed reaction is GTP + H2O = GDP + phosphate + H(+). Its activity is regulated as follows. Regulated by guanine nucleotide exchange factors (GEFs) including RIN3 and GAPVD1 which promote the exchange of bound GDP for free GTP. Regulated by GTPase activating proteins (GAPs) which increase the GTP hydrolysis activity. Inhibited by GDP dissociation inhibitors (GDIs) which prevent Rab-GDP dissociation. The small GTPases Rab are key regulators of intracellular membrane trafficking, from the formation of transport vesicles to their fusion with membranes. Rabs cycle between an inactive GDP-bound form and an active GTP-bound form that is able to recruit to membranes different set of downstream effectors directly responsible for vesicle formation, movement, tethering and fusion. Required for the integrity and for normal function of the Golgi apparatus and the trans-Golgi network. Plays a role in insulin-stimulated translocation of GLUT4 to the cell membrane. Plays a role in the maturation of phagosomes that engulf pathogens, such as S.aureus and Mycobacterium. Plays a role in M6PR transport from the trans-Golgi network to endosomes. Plays a role in the internalization of EGFR from the cell membrane into endosomes. This chain is Ras-related protein Rab-31, found in Mus musculus (Mouse).